Consider the following 258-residue polypeptide: Large ribosomal subunit protein uL3 (258 aa).

The protein belongs to the universal ribosomal protein uL3 family. In terms of assembly, part of the 50S ribosomal subunit. Forms a cluster with proteins L14 and L19.

One of the primary rRNA binding proteins, it binds directly near the 3'-end of the 23S rRNA, where it nucleates assembly of the 50S subunit. The polypeptide is Large ribosomal subunit protein uL3 (Spiroplasma kunkelii).